Consider the following 1097-residue polypeptide: DNA-directed RNA polymerase subunit beta (1097 aa).

Residues 1073-1097 (DVNPRRSTPSRPTYESLGVADYDED) form a disordered region.

Belongs to the RNA polymerase beta chain family. In cyanobacteria the RNAP catalytic core is composed of 2 alpha, 1 beta, 1 beta', 1 gamma and 1 omega subunit. When a sigma factor is associated with the core the holoenzyme is formed, which can initiate transcription.

It catalyses the reaction RNA(n) + a ribonucleoside 5'-triphosphate = RNA(n+1) + diphosphate. Its function is as follows. DNA-dependent RNA polymerase catalyzes the transcription of DNA into RNA using the four ribonucleoside triphosphates as substrates. The protein is DNA-directed RNA polymerase subunit beta of Synechococcus sp. (strain CC9311).